A 493-amino-acid chain; its full sequence is 6-phosphogluconate dehydrogenase, decarboxylating (493 aa).

NADP(+) is bound by residues 12–17 (GLAVMG), 35–37 (NRT), 77–79 (VKA), and N105. Substrate is bound by residues N105 and 131–133 (SGG). K187 serves as the catalytic Proton acceptor. 190-191 (HN) lines the substrate pocket. E194 functions as the Proton donor in the catalytic mechanism. Substrate-binding residues include Y195, K266, R293, R456, and H462.

The protein belongs to the 6-phosphogluconate dehydrogenase family. Homodimer.

The enzyme catalyses 6-phospho-D-gluconate + NADP(+) = D-ribulose 5-phosphate + CO2 + NADPH. It functions in the pathway carbohydrate degradation; pentose phosphate pathway; D-ribulose 5-phosphate from D-glucose 6-phosphate (oxidative stage): step 3/3. Its function is as follows. Catalyzes the oxidative decarboxylation of 6-phosphogluconate to ribulose 5-phosphate and CO(2), with concomitant reduction of NADP to NADPH. The chain is 6-phosphogluconate dehydrogenase, decarboxylating (gnd) from Dictyostelium discoideum (Social amoeba).